We begin with the raw amino-acid sequence, 350 residues long: MIYSLLLSALPLLSSAALTYRGADISSLLIEEDAGISYKNLNGETQALEDILVNNGVNSIRQRVWVDPSDGSYDLDYNLKLAKRVQAAGMSIYLDLHLSDTWADPSDQTTPTGWSTTDIDTLTWQLYNYTLDVCNTFAENDIDIEIVSIGNEISSGLLWPLGKTSNYDNIAKLLHSGAWGVKDSNQATTPKIMIHLDNGWDWEEQEYFYKTVLATGSLLSTDFDLMGVSYYPFYSSEATLSALQTSLTNMQSNYDKSVVVVETNWPVSCPDPEYSFPSDLSSIPFSAAGQEEFLEKLAEVVEGVTDGLGIYYWEPAWVDNAALGSSCADNLMVDIDTDEVLESVTVFEDL.

A signal peptide spans 1 to 16; sequence MIYSLLLSALPLLSSA. Asn-128 carries an N-linked (GlcNAc...) asparagine glycan. Glu-152 (proton donor) is an active-site residue. Glu-262 acts as the Nucleophile in catalysis.

This sequence belongs to the glycosyl hydrolase 53 family.

Its subcellular location is the secreted. It carries out the reaction The enzyme specifically hydrolyzes (1-&gt;4)-beta-D-galactosidic linkages in type I arabinogalactans.. Functionally, endogalactanase involved in the degradation of plant cell wall polysaccharides, and more particularly of hairy regions of pectin. This is Probable arabinogalactan endo-beta-1,4-galactanase A (galA) from Aspergillus niger (strain ATCC MYA-4892 / CBS 513.88 / FGSC A1513).